We begin with the raw amino-acid sequence, 158 residues long: Nucleoside diphosphate kinase (158 aa).

ATP-binding residues include Lys16, Phe64, Arg92, Thr98, Arg109, and Asn119. The active-site Pros-phosphohistidine intermediate is the His122.

The protein belongs to the NDK family. It depends on Mg(2+) as a cofactor.

It is found in the cytoplasm. It catalyses the reaction a 2'-deoxyribonucleoside 5'-diphosphate + ATP = a 2'-deoxyribonucleoside 5'-triphosphate + ADP. It carries out the reaction a ribonucleoside 5'-diphosphate + ATP = a ribonucleoside 5'-triphosphate + ADP. In terms of biological role, major role in the synthesis of nucleoside triphosphates other than ATP. The ATP gamma phosphate is transferred to the NDP beta phosphate via a ping-pong mechanism, using a phosphorylated active-site intermediate. The polypeptide is Nucleoside diphosphate kinase (Haloquadratum walsbyi (strain DSM 16790 / HBSQ001)).